A 505-amino-acid chain; its full sequence is Betaine aldehyde dehydrogenase 1 (505 aa).

163–172 (WNYPLLMATW) is a binding site for betaine aldehyde. Position 240–245 (240–245 (GSTETG)) interacts with NAD(+). Betaine aldehyde contacts are provided by residues Glu262, 294 to 297 (QVCS), and Cys455. Active-site residues include Glu262 and Cys296. 4-aminobutanal contacts are provided by residues 262 to 263 (EL) and Cys296. Trp461 contributes to the 4-aminobutanal binding site. The short motif at 503–505 (SKL) is the Microbody targeting signal element.

The protein belongs to the aldehyde dehydrogenase family. As to quaternary structure, homodimer.

The protein localises to the peroxisome. It catalyses the reaction betaine aldehyde + NAD(+) + H2O = glycine betaine + NADH + 2 H(+). Its pathway is amine and polyamine biosynthesis; betaine biosynthesis via choline pathway; betaine from betaine aldehyde: step 1/1. Functionally, dehydrogenase that can use N-acetyl-gamma-aminobutyraldehyde (NAGABald), gamma-guanidinobutyraldehyde (GGBald), betaine aldehyde (Bet-ald), gamma-aminobutyraldehyde (GAB-ald), acetaldehyde, 4-aminobutylaldehyde (AB-ald), 3-aminopropionaldehyde (AP-ald), 4-N-trimethylaminobutyraldehyde (TMAB-ald) and 3-N-trimethylaminopropionaldehyde (TMAP-ald) as substrates. Catalyzes the oxidation of GAB-ald more efficiently than Bet-ald. May convert acetaldehyde into acetate, thus facilitating the production of acetyl-CoA in peroxisomes under anaerobic conditions. The protein is Betaine aldehyde dehydrogenase 1 (BADH1) of Oryza sativa subsp. japonica (Rice).